Here is a 329-residue protein sequence, read N- to C-terminus: Tryptophan--tRNA ligase (329 aa).

ATP contacts are provided by residues 9-11 (QPS) and 17-18 (GN). Residues 10–18 (PSGIPTIGN) carry the 'HIGH' region motif. Asp-133 is an L-tryptophan binding site. ATP-binding positions include 145–147 (GDD), Val-184, and 193–197 (KMSKS). Positions 193–197 (KMSKS) match the 'KMSKS' region motif.

This sequence belongs to the class-I aminoacyl-tRNA synthetase family. Homodimer.

The protein localises to the cytoplasm. It carries out the reaction tRNA(Trp) + L-tryptophan + ATP = L-tryptophyl-tRNA(Trp) + AMP + diphosphate + H(+). Its function is as follows. Catalyzes the attachment of tryptophan to tRNA(Trp). The polypeptide is Tryptophan--tRNA ligase (Staphylococcus epidermidis (strain ATCC 35984 / DSM 28319 / BCRC 17069 / CCUG 31568 / BM 3577 / RP62A)).